The following is a 121-amino-acid chain: Large ribosomal subunit protein bL19 (121 aa).

It belongs to the bacterial ribosomal protein bL19 family.

In terms of biological role, this protein is located at the 30S-50S ribosomal subunit interface and may play a role in the structure and function of the aminoacyl-tRNA binding site. This Gloeobacter violaceus (strain ATCC 29082 / PCC 7421) protein is Large ribosomal subunit protein bL19.